The sequence spans 672 residues: Hydroxyproline O-galactosyltransferase GALT5 (672 aa).

The Cytoplasmic segment spans residues 1-28 (MKKPKLSKVEKIDKIDLFSSLWKQRSVR). Residues 29–49 (VIMAIGFLYLVIVSVEIPLVF) form a helical; Signal-anchor for type II membrane protein membrane-spanning segment. Topologically, residues 50–672 (KSWSSSSVPL…QNKPECCNMR (623 aa)) are lumenal. Residues 191 to 392 (KLMELPCGLT…DIDVHSVFVA (202 aa)) form the Galectin domain. Residues N306 and N620 are each glycosylated (N-linked (GlcNAc...) asparagine).

This sequence belongs to the glycosyltransferase 31 family. It depends on Mn(2+) as a cofactor. In terms of tissue distribution, expressed in juvenile leaves, stems, cauline leaves and siliques.

The protein localises to the golgi apparatus membrane. The protein operates within protein modification; protein glycosylation. Functionally, possesses hydroxyproline O-galactosyltransferase activity. Transfers galactose from UDP-galactose to hydroxyproline residues in the arabinogalactan proteins (AGPs). Is specific for AGPs containing non-contiguous peptidyl hydroxyproline residues. Utilizes UDP-galactose solely as sugar donor. The addition of galactose onto the peptidyl hydroxyproline residues in AGP core proteins represents the first committed step in arabinogalactan polysaccharide addition. AGP glycans play essential roles in both vegetative and reproductive plant growth. The polypeptide is Hydroxyproline O-galactosyltransferase GALT5 (Arabidopsis thaliana (Mouse-ear cress)).